A 521-amino-acid chain; its full sequence is MEELQGYLEKDKSWQQHLLYPLLFQEYIYALAHDHSLSGSIFYEPVEVFGYDKKSSLALVKRLNTRIYQQNFLISSVNGSNQKRLVGXNNFFXSLFXSQMIIESFAIFXEILFLRALVSFFGEKKVLKYPNLPSIHSIFPFLEXKLPHLNYVSDILIPHPIHMXILVQILQCWIQDVPFLHSLRFFLHEYHNWNSLLITHKKSICLFSKENKRLFRFLYNSYVSEFEFLLVFFRKQSSYLRLRSSGTFLERTHFYGKIEHFQIXHFAFYSSMSXLFPVVXLKXPFMHYVRYQGKALLASKGTHLVMKKWKYHFVTLWQYYFHFWSQLYRIRINXLSNYSFYFLGYLSSVLINFSAVRNQMLENSFLIDIITKKFDSIIPVILLIESLSKAQFCTVSGHPISKPIWADLSDSDILDRFGWICRNLSHYHSGSSKKQDLYRIKYILRLSCARTLARKHKSTVRTFLRRLGPGLLEEFFTEEERVLSLIFPKTISFILHGSHKERIWYLDIIRMNDLVNYSXLX.

Belongs to the intron maturase 2 family. MatK subfamily.

It is found in the plastid. The protein resides in the chloroplast. Its function is as follows. Usually encoded in the trnK tRNA gene intron. Probably assists in splicing its own and other chloroplast group II introns. The polypeptide is Maturase K (Anthericum liliago (St-Bernard's lily)).